A 512-amino-acid polypeptide reads, in one-letter code: Cytochrome P450 monooxygenase FrzL (512 aa).

The helical transmembrane segment at 6–26 (TMLAFVPYLAVFVACYGLVYY) threads the bilayer. Residue Cys-423 participates in heme binding.

This sequence belongs to the cytochrome P450 family. Requires heme as cofactor.

It is found in the membrane. In terms of biological role, cytochrome P450 monooxygenase; part of the gene cluster that mediates the biosynthesis of the alkaloid (-)-FR901483, a potent immunosuppressant that shows efficacy in animal models and a probable inhibitor of purine nucleotide biosynthesis by targeting phosphoribosylpyrophosphate amidotransferase (PPAT). The only unassigned enzyme in the cluster is the second cytochrome P450 monooxygenase FrzL. The biosynthesis of (-)-FR901483 starts with the condensation of two L-tyrosines to yield (S,S)-dityrosyl-piperazine. This process occurs in 3 steps with the non-canonical nonribosomal peptide synthetase FrzA catalyzing the reduction of L-tyrosine into L-tyrosinal, the spontaneous condensation of 2 L-tyrosinal units, and the subsequent reduction by the NmrA-like family domain-containing oxidoreductase FrzB. The cytochrome P450 monooxygenase FrzC then performs coupling between N10 and C1' to morph the piperazine into a 1,4-diazabicyclo[3.2.1]octane spiro-fused to a 2,5-cyclohexadienone. The dienone portion is further reduced to cyclohexanone by the flavin-dependent reductase FrzD. The methyltranserases (MTs) FrzE and FrzF are then involved in the methylation at the C10' amine and the C4 phenolic oxygen, respectively. The order of the two MTs appear to be interchangeable. Cleavage of the C9-N10' bond by the dioxygenase FrzG then leads to formation of a conjugated iminium. In addition to the oxidation of C9, an additional dehydrogenation between C7 and C8 can occur to give a likely shunt product. The next biosynthetic step is the intramolecular aldol condensation catalyzed by the newly identified aldolase FrzH to yield an aza-tricyclic product with the formation of a C9-C3' bond. The short-chain dehydrogenase/reductase FrzI then produces dephospho-(-)-FR901483 that is phosphorylated at C4'-OH into (-)-FR901483 by the phosphotransferase FrzJ. The sequence is that of Cytochrome P450 monooxygenase FrzL from Cladobotryum sp.